The chain runs to 521 residues: Bifunctional purine biosynthesis protein PurH (521 aa).

The region spanning 1-149 (MSDPVIKRAL…KNNESVTVVT (149 aa)) is the MGS-like domain.

Belongs to the PurH family.

It catalyses the reaction (6R)-10-formyltetrahydrofolate + 5-amino-1-(5-phospho-beta-D-ribosyl)imidazole-4-carboxamide = 5-formamido-1-(5-phospho-D-ribosyl)imidazole-4-carboxamide + (6S)-5,6,7,8-tetrahydrofolate. It carries out the reaction IMP + H2O = 5-formamido-1-(5-phospho-D-ribosyl)imidazole-4-carboxamide. It participates in purine metabolism; IMP biosynthesis via de novo pathway; 5-formamido-1-(5-phospho-D-ribosyl)imidazole-4-carboxamide from 5-amino-1-(5-phospho-D-ribosyl)imidazole-4-carboxamide (10-formyl THF route): step 1/1. The protein operates within purine metabolism; IMP biosynthesis via de novo pathway; IMP from 5-formamido-1-(5-phospho-D-ribosyl)imidazole-4-carboxamide: step 1/1. The polypeptide is Bifunctional purine biosynthesis protein PurH (Chlorobium phaeobacteroides (strain DSM 266 / SMG 266 / 2430)).